A 271-amino-acid polypeptide reads, in one-letter code: Ribosomal RNA small subunit methyltransferase A (271 aa).

The S-adenosyl-L-methionine site is built by H11, L13, G38, E58, D86, and N101.

Belongs to the class I-like SAM-binding methyltransferase superfamily. rRNA adenine N(6)-methyltransferase family. RsmA subfamily.

Its subcellular location is the cytoplasm. It catalyses the reaction adenosine(1518)/adenosine(1519) in 16S rRNA + 4 S-adenosyl-L-methionine = N(6)-dimethyladenosine(1518)/N(6)-dimethyladenosine(1519) in 16S rRNA + 4 S-adenosyl-L-homocysteine + 4 H(+). Functionally, specifically dimethylates two adjacent adenosines (A1518 and A1519) in the loop of a conserved hairpin near the 3'-end of 16S rRNA in the 30S particle. May play a critical role in biogenesis of 30S subunits. The chain is Ribosomal RNA small subunit methyltransferase A from Helicobacter pylori (strain P12).